We begin with the raw amino-acid sequence, 430 residues long: Lipoyl synthase, mitochondrial (430 aa).

A mitochondrion-targeting transit peptide spans Met1–Tyr37. A compositionally biased stretch (polar residues) spans Thr39–Pro55. The interval Thr39–Lys58 is disordered. Residues Cys141, Cys146, Cys152, Cys172, Cys176, Cys179, and Ser387 each contribute to the [4Fe-4S] cluster site. The 222-residue stretch at Gly155–Leu376 folds into the Radical SAM core domain.

It belongs to the radical SAM superfamily. Lipoyl synthase family. [4Fe-4S] cluster serves as cofactor.

It localises to the mitochondrion. The enzyme catalyses [[Fe-S] cluster scaffold protein carrying a second [4Fe-4S](2+) cluster] + N(6)-octanoyl-L-lysyl-[protein] + 2 oxidized [2Fe-2S]-[ferredoxin] + 2 S-adenosyl-L-methionine + 4 H(+) = [[Fe-S] cluster scaffold protein] + N(6)-[(R)-dihydrolipoyl]-L-lysyl-[protein] + 4 Fe(3+) + 2 hydrogen sulfide + 2 5'-deoxyadenosine + 2 L-methionine + 2 reduced [2Fe-2S]-[ferredoxin]. Its pathway is protein modification; protein lipoylation via endogenous pathway; protein N(6)-(lipoyl)lysine from octanoyl-[acyl-carrier-protein]: step 2/2. Functionally, catalyzes the radical-mediated insertion of two sulfur atoms into the C-6 and C-8 positions of the octanoyl moiety bound to the lipoyl domains of lipoate-dependent enzymes, thereby converting the octanoylated domains into lipoylated derivatives. The sequence is that of Lipoyl synthase, mitochondrial from Ajellomyces capsulatus (strain G186AR / H82 / ATCC MYA-2454 / RMSCC 2432) (Darling's disease fungus).